A 98-amino-acid polypeptide reads, in one-letter code: Cystatin-B (98 aa).

An N-acetylmethionine modification is found at Met1. A Secondary area of contact motif is present at residues Gln46–Gly50.

This sequence belongs to the cystatin family. As to quaternary structure, able to form dimers stabilized by noncovalent forces.

The protein resides in the cytoplasm. This is an intracellular thiol proteinase inhibitor. This chain is Cystatin-B (CSTB), found in Bos taurus (Bovine).